We begin with the raw amino-acid sequence, 471 residues long: Reticulon-2 (471 aa).

Disordered stretches follow at residues 1–137, 153–181, and 205–234; these read MGQV…ERPL, SAGS…ASEA, and QLSP…DDEP. Positions 14-25 are enriched in low complexity; that stretch reads APSTASSTPDST. A compositionally biased stretch (basic and acidic residues) spans 32–43; sequence SDFRELHTAREF. Ser-44 bears the Phosphoserine mark. 2 stretches are compositionally biased toward polar residues: residues 100-118 and 159-168; these read PQQS…LSQS and DSATSSSTPL. Residues 169–181 are compositionally biased toward acidic residues; it reads ENEEPDGLEASEA. The segment covering 205-229 has biased composition (polar residues); it reads QLSPSSGTPQAHTPSPQRSQDSNSG. Phosphoserine occurs at positions 226 and 228. Positions 272–471 constitute a Reticulon domain; sequence VADLLYWKDT…SVSGSKAKAE (200 aa). Helical transmembrane passes span 295–315 and 390–410; these read LLCL…LLGL and LLFY…LVIL.

In terms of assembly, interacts with SPAST. Interacts with BACE1. Interacts (via first transmembrane domain) with ARL6IP5/GTRAP3-18. Interacts (via N-terminus) with SLC1A1/EAAC1; the interaction promotes cell surface expression of SLC1A1. As to expression, detected in skeletal and cardiac muscle (at protein level). Expressed predominantly in neural and muscular tissues.

Its subcellular location is the endoplasmic reticulum membrane. It is found in the sarcoplasmic reticulum membrane. The protein resides in the cell membrane. It localises to the sarcolemma. The protein localises to the T-tubule. Its subcellular location is the cytoplasm. It is found in the myofibril. The protein resides in the sarcomere. It localises to the z line. The protein localises to the cytoskeleton. Its function is as follows. Inhibits amyloid precursor protein processing, probably by blocking BACE1 activity. Enhances trafficking of the glutamate transporter SLC1A1/EAAC1 from the endoplasmic reticulum to the cell surface. Plays a role in the translocation of SLC2A4/GLUT4 from intracellular membranes to the cell membrane which facilitates the uptake of glucose into the cell. This is Reticulon-2 from Mus musculus (Mouse).